We begin with the raw amino-acid sequence, 808 residues long: Dynamin-like protein B (808 aa).

The Dynamin-type G domain occupies 43–340 (FIETPEFVFI…TWRKYLDSVP (298 aa)). The tract at residues 53-60 (GKDGNGKS) is G1 motif. 53 to 60 (GKDGNGKS) provides a ligand contact to GTP. A G2 motif region spans residues 79 to 80 (LR). The segment at 150 to 153 (EPPS) is G3 motif. GTP is bound by residues 150–154 (EPPSV) and 239–242 (NKFH). Residues 239-242 (NKFH) form a G4 motif region. The interval 276–279 (PSTA) is G5 motif. Disordered stretches follow at residues 536–565 (SSFR…SSSI) and 665–695 (SLNN…NSNH). 2 stretches are compositionally biased toward low complexity: residues 552–565 (SSPS…SSSI) and 665–694 (SLNN…NNSN).

It belongs to the TRAFAC class dynamin-like GTPase superfamily. Dynamin/Fzo/YdjA family.

It is found in the cytoplasm. The catalysed reaction is GTP + H2O = GDP + phosphate + H(+). In terms of biological role, involved in cytokinesis. May hydrolyze GTP. This is Dynamin-like protein B (dlpB) from Dictyostelium discoideum (Social amoeba).